The following is a 152-amino-acid chain: ARL14 effector protein-like (152 aa).

A compositionally biased stretch (polar residues) spans methionine 1 to threonine 16. Positions methionine 1–isoleucine 27 are disordered.

This is ARL14 effector protein-like (Arl14epl) from Mus musculus (Mouse).